A 200-amino-acid chain; its full sequence is 3-isopropylmalate dehydratase small subunit (200 aa).

Belongs to the LeuD family. LeuD type 1 subfamily. Heterodimer of LeuC and LeuD.

The enzyme catalyses (2R,3S)-3-isopropylmalate = (2S)-2-isopropylmalate. It participates in amino-acid biosynthesis; L-leucine biosynthesis; L-leucine from 3-methyl-2-oxobutanoate: step 2/4. Functionally, catalyzes the isomerization between 2-isopropylmalate and 3-isopropylmalate, via the formation of 2-isopropylmaleate. This Vibrio vulnificus (strain YJ016) protein is 3-isopropylmalate dehydratase small subunit.